The primary structure comprises 406 residues: Nicotinate phosphoribosyltransferase (406 aa).

Position 226 is a phosphohistidine; by autocatalysis (H226).

This sequence belongs to the NAPRTase family. Transiently phosphorylated on a His residue during the reaction cycle. Phosphorylation strongly increases the affinity for substrates and increases the rate of nicotinate D-ribonucleotide production. Dephosphorylation regenerates the low-affinity form of the enzyme, leading to product release.

The enzyme catalyses nicotinate + 5-phospho-alpha-D-ribose 1-diphosphate + ATP + H2O = nicotinate beta-D-ribonucleotide + ADP + phosphate + diphosphate. Its pathway is cofactor biosynthesis; NAD(+) biosynthesis; nicotinate D-ribonucleotide from nicotinate: step 1/1. Its function is as follows. Catalyzes the synthesis of beta-nicotinate D-ribonucleotide from nicotinate and 5-phospho-D-ribose 1-phosphate at the expense of ATP. The sequence is that of Nicotinate phosphoribosyltransferase from Verminephrobacter eiseniae (strain EF01-2).